A 61-amino-acid polypeptide reads, in one-letter code: Temporin-SN2 (61 aa).

The first 22 residues, 1-22 (MFTLKKTLLLLFFLGTINLSLC), serve as a signal peptide directing secretion. The propeptide at 23-44 (EEERNAEEERRDGDDEMDVEVK) is removed in mature form. Lysine 61 is subject to Lysine amide.

The protein belongs to the frog skin active peptide (FSAP) family. Temporin subfamily. Expressed by the skin glands.

It localises to the secreted. Its function is as follows. Antimicrobial peptide. Active against some Gram-positive and Gram-negative bacterial strains. Active against fungus C.glabrata 090902 but not against C.albicans ATCC 12231. Shows very weak hemolytic activity against human erythrocytes. The chain is Temporin-SN2 from Sylvirana spinulosa (Fine-spined frog).